Here is a 141-residue protein sequence, read N- to C-terminus: Hemoglobin subunit alpha (141 aa).

One can recognise a Globin domain in the interval 1-141 (VLSPADKTNV…VSTVLTSKYR (141 aa)). A Phosphoserine modification is found at Ser3. Lys7 bears the N6-succinyllysine mark. Thr8 bears the Phosphothreonine mark. Residue Lys11 is modified to N6-succinyllysine. N6-acetyllysine; alternate is present on Lys16. Lys16 carries the post-translational modification N6-succinyllysine; alternate. Tyr24 is subject to Phosphotyrosine. Ser35 is subject to Phosphoserine. The residue at position 40 (Lys40) is an N6-succinyllysine. Ser49 bears the Phosphoserine mark. Residue His58 coordinates O2. His87 is a binding site for heme b. Ser102 is modified (phosphoserine). A Phosphothreonine modification is found at Thr108. 2 positions are modified to phosphoserine: Ser124 and Ser131. 2 positions are modified to phosphothreonine: Thr134 and Thr137. Position 138 is a phosphoserine (Ser138).

Belongs to the globin family. As to quaternary structure, heterotetramer of two alpha chains and two beta chains. In terms of tissue distribution, red blood cells.

In terms of biological role, involved in oxygen transport from the lung to the various peripheral tissues. Its function is as follows. Hemopressin acts as an antagonist peptide of the cannabinoid receptor CNR1. Hemopressin-binding efficiently blocks cannabinoid receptor CNR1 and subsequent signaling. This Gorilla gorilla gorilla (Western lowland gorilla) protein is Hemoglobin subunit alpha (HBA).